Reading from the N-terminus, the 194-residue chain is dCTP deaminase (194 aa).

DCTP contacts are provided by residues 110 to 115 (RSSLAR), Asp128, 136 to 138 (VLE), Tyr171, Lys178, and Gln182. Glu138 (proton donor/acceptor) is an active-site residue. The interval 175 to 194 (KDAKYKNQQSAVSSRINQDD) is disordered. Polar residues predominate over residues 180–194 (KNQQSAVSSRINQDD).

Belongs to the dCTP deaminase family. Homotrimer.

The catalysed reaction is dCTP + H2O + H(+) = dUTP + NH4(+). It functions in the pathway pyrimidine metabolism; dUMP biosynthesis; dUMP from dCTP (dUTP route): step 1/2. Catalyzes the deamination of dCTP to dUTP. This chain is dCTP deaminase, found in Actinobacillus pleuropneumoniae serotype 5b (strain L20).